The primary structure comprises 211 residues: Large ribosomal subunit protein uL3 (211 aa).

The segment at 122–147 is disordered; that stretch reads AIKRHGQSRGPMAHGSRYHRRPGSMG.

The protein belongs to the universal ribosomal protein uL3 family. Part of the 50S ribosomal subunit. Forms a cluster with proteins L14 and L19.

Functionally, one of the primary rRNA binding proteins, it binds directly near the 3'-end of the 23S rRNA, where it nucleates assembly of the 50S subunit. The protein is Large ribosomal subunit protein uL3 of Geobacillus sp. (strain WCH70).